The sequence spans 406 residues: Succinylornithine transaminase (406 aa).

Residue K252 is modified to N6-(pyridoxal phosphate)lysine.

This sequence belongs to the class-III pyridoxal-phosphate-dependent aminotransferase family. AstC subfamily. Pyridoxal 5'-phosphate is required as a cofactor.

It carries out the reaction N(2)-succinyl-L-ornithine + 2-oxoglutarate = N-succinyl-L-glutamate 5-semialdehyde + L-glutamate. It participates in amino-acid degradation; L-arginine degradation via AST pathway; L-glutamate and succinate from L-arginine: step 3/5. Catalyzes the transamination of N(2)-succinylornithine and alpha-ketoglutarate into N(2)-succinylglutamate semialdehyde and glutamate. Can also act as an acetylornithine aminotransferase. The chain is Succinylornithine transaminase from Escherichia coli O17:K52:H18 (strain UMN026 / ExPEC).